Consider the following 80-residue polypeptide: Translation initiation factor IF-1, chloroplastic (80 aa).

The S1-like domain maps to 1-74 (MKEQKWIHEG…TRGRIIYRLR (74 aa)).

This sequence belongs to the IF-1 family. Component of the 30S ribosomal translation pre-initiation complex which assembles on the 30S ribosome in the order IF-2 and IF-3, IF-1 and N-formylmethionyl-tRNA(fMet); mRNA recruitment can occur at any time during PIC assembly.

The protein localises to the plastid. The protein resides in the chloroplast. In terms of biological role, one of the essential components for the initiation of protein synthesis. Stabilizes the binding of IF-2 and IF-3 on the 30S subunit to which N-formylmethionyl-tRNA(fMet) subsequently binds. Helps modulate mRNA selection, yielding the 30S pre-initiation complex (PIC). Upon addition of the 50S ribosomal subunit IF-1, IF-2 and IF-3 are released leaving the mature 70S translation initiation complex. This chain is Translation initiation factor IF-1, chloroplastic, found in Illicium oligandrum (Star anise).